A 395-amino-acid polypeptide reads, in one-letter code: Na(+)/H(+) antiporter NhaA (395 aa).

Helical transmembrane passes span 11–31, 61–81, 96–116, 127–147, 156–176, 179–199, 202–222, 264–284, 295–315, 331–351, and 366–386; these read FAME…ALII, LLLW…GLEV, IVLP…IYWF, GWAI…ALLG, LFLM…IAIF, GTLS…LVAM, MGVV…VCVL, FGIL…GVTL, IAVG…WMAV, VLGV…VGSL, and MGIL…TAAA.

This sequence belongs to the NhaA Na(+)/H(+) (TC 2.A.33) antiporter family.

It is found in the cell inner membrane. It catalyses the reaction Na(+)(in) + 2 H(+)(out) = Na(+)(out) + 2 H(+)(in). Na(+)/H(+) antiporter that extrudes sodium in exchange for external protons. The protein is Na(+)/H(+) antiporter NhaA of Pseudomonas fluorescens (strain ATCC BAA-477 / NRRL B-23932 / Pf-5).